We begin with the raw amino-acid sequence, 284 residues long: 2,3,4,5-tetrahydropyridine-2,6-dicarboxylate N-succinyltransferase (284 aa).

Substrate contacts are provided by arginine 111 and aspartate 148.

It belongs to the transferase hexapeptide repeat family. Homotrimer.

The protein resides in the cytoplasm. It carries out the reaction (S)-2,3,4,5-tetrahydrodipicolinate + succinyl-CoA + H2O = (S)-2-succinylamino-6-oxoheptanedioate + CoA. It functions in the pathway amino-acid biosynthesis; L-lysine biosynthesis via DAP pathway; LL-2,6-diaminopimelate from (S)-tetrahydrodipicolinate (succinylase route): step 1/3. This chain is 2,3,4,5-tetrahydropyridine-2,6-dicarboxylate N-succinyltransferase, found in Chelativorans sp. (strain BNC1).